We begin with the raw amino-acid sequence, 1009 residues long: Serine/threonine-protein phosphatase BSL2 homolog (1009 aa).

The segment at 1-48 (MDVDSRMTTESDSDSDAAAQGGGGGGFGSETSSASPSAPGTPTAMGAG) is disordered. Residues 29-45 (SETSSASPSAPGTPTAM) are compositionally biased toward low complexity. Kelch repeat units lie at residues 136 to 182 (SSAG…VATA), 240 to 288 (FLLT…TASA), 293 to 344 (LLLL…FVNA), 349 to 396 (SGGA…DAAG), and 417 to 463 (MIYV…IQAG). Residues 549–572 (QVNGEAEHSPDREQSPDATPSVKQ) form a disordered region. Over residues 553–563 (EAEHSPDREQS) the composition is skewed to basic and acidic residues. Asp-711, His-713, Asp-745, and Asn-777 together coordinate Mn(2+). His-778 (proton donor) is an active-site residue. The Mn(2+) site is built by His-830 and His-909. Residues 984–1009 (NANRPPTPTRGRPQAANNDRGSLAWI) form a disordered region.

It belongs to the PPP phosphatase family. BSU subfamily. Requires Mn(2+) as cofactor.

It is found in the nucleus. The enzyme catalyses O-phospho-L-seryl-[protein] + H2O = L-seryl-[protein] + phosphate. The catalysed reaction is O-phospho-L-threonyl-[protein] + H2O = L-threonyl-[protein] + phosphate. In Oryza sativa subsp. japonica (Rice), this protein is Serine/threonine-protein phosphatase BSL2 homolog (BSL2).